Reading from the N-terminus, the 128-residue chain is MPKSVIIPAGSSAPLAPFVPGTLADGVVYVSGTLAFDQHNNVLFADDPKAQTRHVLEIIRKVIETAGGTMADVTFNSIFITDWKNYAAINEIYAEFFPGDKPARFCIQCGLVKPDALVEIATIAHIAK.

The protein belongs to the RutC family. In terms of assembly, homotrimer.

The enzyme catalyses (Z)-3-aminoacrylate + H2O + H(+) = 3-oxopropanoate + NH4(+). In terms of biological role, involved in pyrimidine catabolism. Catalyzes the deamination of 3-aminoacrylate to malonic semialdehyde, a reaction that can also occur spontaneously. RutC may facilitate the reaction and modulate the metabolic fitness, rather than catalyzing essential functions. The chain is 3-aminoacrylate deaminase RutC from Escherichia coli O111:H- (strain 11128 / EHEC).